Reading from the N-terminus, the 501-residue chain is GDP-fucose protein O-fucosyltransferase 4 (501 aa).

The Cytoplasmic segment spans residues methionine 1–lysine 10. Residues methionine 11–alanine 31 form a helical; Signal-anchor for type II membrane protein membrane-spanning segment. Residues serine 32–asparagine 501 lie on the Lumenal side of the membrane. Residue asparagine 173 is glycosylated (N-linked (GlcNAc...) asparagine). An intrachain disulfide couples cysteine 396 to cysteine 399. 2 N-linked (GlcNAc...) asparagine glycosylation sites follow: asparagine 428 and asparagine 478.

This sequence belongs to the glycosyltransferase 10 family.

It is found in the endoplasmic reticulum membrane. It catalyses the reaction L-threonyl-[protein] + GDP-beta-L-fucose = 3-O-(alpha-L-fucosyl)-L-threonyl-[protein] + GDP + H(+). It carries out the reaction L-seryl-[protein] + GDP-beta-L-fucose = 3-O-(alpha-L-fucosyl)-L-seryl-[protein] + GDP + H(+). The protein operates within protein modification; protein glycosylation. Its function is as follows. Protein O-fucosyltransferase that specifically catalyzes O-fucosylation of serine or threonine residues in EMI domains of target proteins. Attaches fucose through an O-glycosidic linkage. O-fucosylation of EMI domain-containing proteins may be required for facilitating protein folding and secretion. The sequence is that of GDP-fucose protein O-fucosyltransferase 4 (fut11) from Takifugu rubripes (Japanese pufferfish).